We begin with the raw amino-acid sequence, 176 residues long: NAD(P)H-quinone oxidoreductase subunit 6, chloroplastic (176 aa).

Transmembrane regions (helical) follow at residues 10–30 (FLLV…VLLP), 32–52 (PIYS…FYIL), 61–81 (AQLL…VMFM), 92–112 (LWTV…ISLI), and 152–172 (FFLP…GAIA).

The protein belongs to the complex I subunit 6 family. In terms of assembly, NDH is composed of at least 16 different subunits, 5 of which are encoded in the nucleus.

The protein localises to the plastid. It localises to the chloroplast thylakoid membrane. The catalysed reaction is a plastoquinone + NADH + (n+1) H(+)(in) = a plastoquinol + NAD(+) + n H(+)(out). It catalyses the reaction a plastoquinone + NADPH + (n+1) H(+)(in) = a plastoquinol + NADP(+) + n H(+)(out). In terms of biological role, NDH shuttles electrons from NAD(P)H:plastoquinone, via FMN and iron-sulfur (Fe-S) centers, to quinones in the photosynthetic chain and possibly in a chloroplast respiratory chain. The immediate electron acceptor for the enzyme in this species is believed to be plastoquinone. Couples the redox reaction to proton translocation, and thus conserves the redox energy in a proton gradient. The polypeptide is NAD(P)H-quinone oxidoreductase subunit 6, chloroplastic (ndhG) (Solanum tuberosum (Potato)).